Here is a 672-residue protein sequence, read N- to C-terminus: Glycerophosphocholine phosphodiesterase GPCPD1 (672 aa).

The CBM20 domain maps to 1–115 (MTPSQVAFEI…IIIDDGQFGI (115 aa)). Residues Lys70 and 88–89 (HK) each bind substrate. Ser175 and Ser424 each carry phosphoserine. The 301-residue stretch at 318–618 (PLDVGHRGAG…DRIYDWMPEQ (301 aa)) folds into the GP-PDE domain. Position 608 is a phosphotyrosine (Tyr608).

The protein belongs to the glycerophosphoryl diester phosphodiesterase family. In terms of tissue distribution, widely expressed, with highest expression in spinal chord.

Its subcellular location is the cytoplasm. It is found in the cytosol. It carries out the reaction sn-glycerol 3-phosphocholine + H2O = sn-glycerol 3-phosphate + choline + H(+). Functionally, may be involved in the negative regulation of skeletal muscle differentiation, independently of its glycerophosphocholine phosphodiesterase activity. This is Glycerophosphocholine phosphodiesterase GPCPD1 (GPCPD1) from Homo sapiens (Human).